The chain runs to 445 residues: UPF0210 protein SPJ_0248 (445 aa).

This sequence belongs to the UPF0210 family. Homodimer.

This is UPF0210 protein SPJ_0248 from Streptococcus pneumoniae (strain JJA).